The sequence spans 213 residues: Orotate phosphoribosyltransferase (213 aa).

5-phospho-alpha-D-ribose 1-diphosphate is bound at residue Lys26. An orotate-binding site is contributed by 34–35 (FF). Residues 72 to 73 (YK), Arg98, Lys99, Lys102, and 123 to 131 (DDVISAGTS) contribute to the 5-phospho-alpha-D-ribose 1-diphosphate site. Orotate-binding residues include Ser127 and Arg155.

This sequence belongs to the purine/pyrimidine phosphoribosyltransferase family. PyrE subfamily. Homodimer. Mg(2+) is required as a cofactor.

It catalyses the reaction orotidine 5'-phosphate + diphosphate = orotate + 5-phospho-alpha-D-ribose 1-diphosphate. It functions in the pathway pyrimidine metabolism; UMP biosynthesis via de novo pathway; UMP from orotate: step 1/2. Catalyzes the transfer of a ribosyl phosphate group from 5-phosphoribose 1-diphosphate to orotate, leading to the formation of orotidine monophosphate (OMP). The chain is Orotate phosphoribosyltransferase from Neisseria gonorrhoeae (strain NCCP11945).